Consider the following 197-residue polypeptide: Large ribosomal subunit protein bL25 (197 aa).

The protein belongs to the bacterial ribosomal protein bL25 family. CTC subfamily. Part of the 50S ribosomal subunit; part of the 5S rRNA/L5/L18/L25 subcomplex. Contacts the 5S rRNA. Binds to the 5S rRNA independently of L5 and L18.

Functionally, this is one of the proteins that binds to the 5S RNA in the ribosome where it forms part of the central protuberance. This is Large ribosomal subunit protein bL25 from Streptomyces avermitilis (strain ATCC 31267 / DSM 46492 / JCM 5070 / NBRC 14893 / NCIMB 12804 / NRRL 8165 / MA-4680).